The chain runs to 163 residues: MSDWCYLNSEEKDKLIDKLYKKLIKKGRVVCEVSDIRHRIYKRLEYNGHKFERKIIGYEPGVISLSREHNTELEWNLWKIAGWINSKRITKEELELACETHNMMYPKRKVKVSSIEEAFDGELSIGQIYYLIQDKWKKVVDKNPNPFDYCNLRDTIVKIKLVK.

The protein belongs to the mimivirus L242/L243 family.

This is an uncharacterized protein from Acanthamoeba polyphaga (Amoeba).